Here is a 209-residue protein sequence, read N- to C-terminus: Large ribosomal subunit protein uL3 (209 aa).

A disordered region spans residues Ala122–Pro151.

It belongs to the universal ribosomal protein uL3 family. Part of the 50S ribosomal subunit. Forms a cluster with proteins L14 and L19.

In terms of biological role, one of the primary rRNA binding proteins, it binds directly near the 3'-end of the 23S rRNA, where it nucleates assembly of the 50S subunit. The sequence is that of Large ribosomal subunit protein uL3 from Bacillus velezensis (strain DSM 23117 / BGSC 10A6 / LMG 26770 / FZB42) (Bacillus amyloliquefaciens subsp. plantarum).